A 705-amino-acid chain; its full sequence is Polyribonucleotide nucleotidyltransferase (705 aa).

Mg(2+)-binding residues include Asp492 and Asp498. The 60-residue stretch at 559–618 folds into the KH domain; it reads PLMITMKVSPDKIRHIIGPGGKIINKIIDETGVEIDIDDDGSVYILAQDQESGNRAKEII. Residues 628–696 form the S1 motif domain; that stretch reads GDIYEGRVKK…ELGRINLSRK (69 aa).

The protein belongs to the polyribonucleotide nucleotidyltransferase family. Requires Mg(2+) as cofactor.

The protein localises to the cytoplasm. It carries out the reaction RNA(n+1) + phosphate = RNA(n) + a ribonucleoside 5'-diphosphate. In terms of biological role, involved in mRNA degradation. Catalyzes the phosphorolysis of single-stranded polyribonucleotides processively in the 3'- to 5'-direction. This chain is Polyribonucleotide nucleotidyltransferase, found in Halothermothrix orenii (strain H 168 / OCM 544 / DSM 9562).